Consider the following 298-residue polypeptide: ATP phosphoribosyltransferase (298 aa).

Belongs to the ATP phosphoribosyltransferase family. Long subfamily. The cofactor is Mg(2+).

Its subcellular location is the cytoplasm. It carries out the reaction 1-(5-phospho-beta-D-ribosyl)-ATP + diphosphate = 5-phospho-alpha-D-ribose 1-diphosphate + ATP. Its pathway is amino-acid biosynthesis; L-histidine biosynthesis; L-histidine from 5-phospho-alpha-D-ribose 1-diphosphate: step 1/9. Feedback inhibited by histidine. Functionally, catalyzes the condensation of ATP and 5-phosphoribose 1-diphosphate to form N'-(5'-phosphoribosyl)-ATP (PR-ATP). Has a crucial role in the pathway because the rate of histidine biosynthesis seems to be controlled primarily by regulation of HisG enzymatic activity. The chain is ATP phosphoribosyltransferase from Psychromonas ingrahamii (strain DSM 17664 / CCUG 51855 / 37).